An 830-amino-acid chain; its full sequence is Vacuolar protein sorting-associated protein 11 homolog (830 aa).

Residues 733–775 (CDICREMLSMQSIYFLCQHSFHEECLNYKSTKRQEKFLCIICK) form an RING-type; atypical zinc finger.

The protein belongs to the VPS11 family. Part of the homotypic fusion and vacuole protein sorting (HOPS) complex, composed of Vps16A, car/Vps33A, dor/Vps18, Vps39, Vps11 and lt/Vps41. Unlike in other species, not part of the class C core vacuole/endosome tethering (CORVET) complex.

The protein resides in the late endosome membrane. It localises to the lysosome membrane. Its function is as follows. Part of the homotypic fusion and vacuole protein sorting (HOPS) tethering complex involved in endo-lysosomal vesicle trafficking and lysosome biogenesis, but unlike in many other species does not form part of the class C core vacuole/endosome tethering (CORVET) complex. The HOPS complex facilitates docking and fusion of lysosomes with late endosomes and several other types of vesicles. The HOPS complex is also involved in autophagy, pigment granule biogenesis and crinophagy (the elimination of unused secretory granules through fusion with lysosomes). The HOPS complex probably instigates autophagosome-lysosome fusion by binding autophagosome-associated Syx17/syntaxin 17 and promoting assembly of the trans-SNARE complex. Independent of Syx17/syntaxin 17, HOPS is involved in biosynthetic transport to lysosomes and lysosome-related organelles such as eye-pigment granules. Required for autophagocytosis-dependent remodeling of myofibrils and transverse-tubules (T-tubules) during metamorphosis. This is Vacuolar protein sorting-associated protein 11 homolog from Drosophila melanogaster (Fruit fly).